We begin with the raw amino-acid sequence, 183 residues long: Ribosome rescue factor SmrB (183 aa).

The Smr domain occupies 98–173 (LDLHGLTQKQ…GDAALLVLIE (76 aa)).

Belongs to the SmrB family. Associates with collided ribosomes, but not with correctly translating polysomes.

Acts as a ribosome collision sensor. Detects stalled/collided disomes (pairs of ribosomes where the leading ribosome is stalled and a second ribosome has collided with it) and endonucleolytically cleaves mRNA at the 5' boundary of the stalled ribosome. Stalled/collided disomes form a new interface (primarily via the 30S subunits) that binds SmrB. Cleaved mRNA becomes available for tmRNA ligation, leading to ribosomal subunit dissociation and rescue of stalled ribosomes. The polypeptide is Ribosome rescue factor SmrB (Erwinia tasmaniensis (strain DSM 17950 / CFBP 7177 / CIP 109463 / NCPPB 4357 / Et1/99)).